Reading from the N-terminus, the 218-residue chain is Translation initiation factor 6 (218 aa).

This sequence belongs to the eIF-6 family.

Binds to the 50S ribosomal subunit and prevents its association with the 30S ribosomal subunit to form the 70S initiation complex. This is Translation initiation factor 6 from Methanosarcina acetivorans (strain ATCC 35395 / DSM 2834 / JCM 12185 / C2A).